The primary structure comprises 354 residues: tRNA N6-adenosine threonylcarbamoyltransferase (354 aa).

Fe cation contacts are provided by histidine 115 and histidine 119. Substrate is bound by residues 138–142 (LVSGG), aspartate 171, glycine 184, and asparagine 285. Residue aspartate 313 participates in Fe cation binding.

This sequence belongs to the KAE1 / TsaD family. Fe(2+) serves as cofactor.

The protein resides in the cytoplasm. The enzyme catalyses L-threonylcarbamoyladenylate + adenosine(37) in tRNA = N(6)-L-threonylcarbamoyladenosine(37) in tRNA + AMP + H(+). Required for the formation of a threonylcarbamoyl group on adenosine at position 37 (t(6)A37) in tRNAs that read codons beginning with adenine. Is involved in the transfer of the threonylcarbamoyl moiety of threonylcarbamoyl-AMP (TC-AMP) to the N6 group of A37, together with TsaE and TsaB. TsaD likely plays a direct catalytic role in this reaction. The sequence is that of tRNA N6-adenosine threonylcarbamoyltransferase from Albidiferax ferrireducens (strain ATCC BAA-621 / DSM 15236 / T118) (Rhodoferax ferrireducens).